A 182-amino-acid chain; its full sequence is Ribosome maturation factor RimM (182 aa).

Positions 103–182 constitute a PRC barrel domain; sequence EDEFYWRELF…RIEVDWDPAF (80 aa).

Belongs to the RimM family. In terms of assembly, binds ribosomal protein uS19.

It is found in the cytoplasm. An accessory protein needed during the final step in the assembly of 30S ribosomal subunit, possibly for assembly of the head region. Essential for efficient processing of 16S rRNA. May be needed both before and after RbfA during the maturation of 16S rRNA. It has affinity for free ribosomal 30S subunits but not for 70S ribosomes. The sequence is that of Ribosome maturation factor RimM from Vibrio cholerae serotype O1 (strain ATCC 39315 / El Tor Inaba N16961).